The chain runs to 381 residues: 1-deoxy-D-xylulose 5-phosphate reductoisomerase (381 aa).

NADPH contacts are provided by Ser10, Gly11, Ser12, Ile13, Gly36, Lys37, Asn38, and Asn121. Lys122 contacts 1-deoxy-D-xylulose 5-phosphate. Glu123 is an NADPH binding site. Asp147 provides a ligand contact to Mn(2+). 1-deoxy-D-xylulose 5-phosphate is bound by residues Ser148, Glu149, Ser173, and His196. Glu149 contributes to the Mn(2+) binding site. Residue Gly202 coordinates NADPH. 4 residues coordinate 1-deoxy-D-xylulose 5-phosphate: Ser209, Asn214, Lys215, and Glu218. Glu218 lines the Mn(2+) pocket.

Belongs to the DXR family. The cofactor is Mg(2+). Mn(2+) serves as cofactor.

The catalysed reaction is 2-C-methyl-D-erythritol 4-phosphate + NADP(+) = 1-deoxy-D-xylulose 5-phosphate + NADPH + H(+). It functions in the pathway isoprenoid biosynthesis; isopentenyl diphosphate biosynthesis via DXP pathway; isopentenyl diphosphate from 1-deoxy-D-xylulose 5-phosphate: step 1/6. In terms of biological role, catalyzes the NADPH-dependent rearrangement and reduction of 1-deoxy-D-xylulose-5-phosphate (DXP) to 2-C-methyl-D-erythritol 4-phosphate (MEP). This chain is 1-deoxy-D-xylulose 5-phosphate reductoisomerase, found in Geobacillus sp. (strain WCH70).